The chain runs to 373 residues: Glutamate 5-kinase (373 aa).

Residue K16 participates in ATP binding. Substrate is bound by residues S56, D143, and N155. An ATP-binding site is contributed by 175 to 176 (TD). Positions 281–359 (RGRLTLDDGA…SRIDSLLGYK (79 aa)) constitute a PUA domain.

This sequence belongs to the glutamate 5-kinase family.

It is found in the cytoplasm. It carries out the reaction L-glutamate + ATP = L-glutamyl 5-phosphate + ADP. Its pathway is amino-acid biosynthesis; L-proline biosynthesis; L-glutamate 5-semialdehyde from L-glutamate: step 1/2. Its function is as follows. Catalyzes the transfer of a phosphate group to glutamate to form L-glutamate 5-phosphate. In Saccharophagus degradans (strain 2-40 / ATCC 43961 / DSM 17024), this protein is Glutamate 5-kinase.